A 1163-amino-acid chain; its full sequence is Carbamoyl phosphate synthase large chain (1163 aa).

The interval Met1–Glu456 is carboxyphosphate synthetic domain. Arg129 is an ATP binding site. The disordered stretch occupies residues Leu148–Lys170. Residues Asp153 to Lys170 are compositionally biased toward basic and acidic residues. In terms of domain architecture, ATP-grasp 1 spans Leu185–Val381. Arg222, Gly228, Gly229, Glu261, Val263, Glu268, Gly294, Val295, His296, Gln338, and Glu352 together coordinate ATP. Mg(2+) contacts are provided by Gln338, Glu352, and Asn354. Mn(2+) contacts are provided by Gln338, Glu352, and Asn354. The oligomerization domain stretch occupies residues Thr457–Ala614. The segment at Gln615–Gly1026 is carbamoyl phosphate synthetic domain. The 213-residue stretch at Gln743–Ala955 folds into the ATP-grasp 2 domain. Residues Arg779, Ser839, Leu841, Glu846, Gly871, Ile872, His873, Ser874, Gln914, and Glu926 each coordinate ATP. Residues Gln914, Glu926, and Asn928 each contribute to the Mg(2+) site. Mn(2+) is bound by residues Gln914, Glu926, and Asn928. The region spanning Val1027 to Thr1163 is the MGS-like domain. Residues Val1027–Thr1163 form an allosteric domain region.

It belongs to the CarB family. In terms of assembly, composed of two chains; the small (or glutamine) chain promotes the hydrolysis of glutamine to ammonia, which is used by the large (or ammonia) chain to synthesize carbamoyl phosphate. Tetramer of heterodimers (alpha,beta)4. The cofactor is Mg(2+). It depends on Mn(2+) as a cofactor.

The enzyme catalyses hydrogencarbonate + L-glutamine + 2 ATP + H2O = carbamoyl phosphate + L-glutamate + 2 ADP + phosphate + 2 H(+). The catalysed reaction is hydrogencarbonate + NH4(+) + 2 ATP = carbamoyl phosphate + 2 ADP + phosphate + 2 H(+). Its pathway is amino-acid biosynthesis; L-arginine biosynthesis; carbamoyl phosphate from bicarbonate: step 1/1. The protein operates within pyrimidine metabolism; UMP biosynthesis via de novo pathway; (S)-dihydroorotate from bicarbonate: step 1/3. Large subunit of the glutamine-dependent carbamoyl phosphate synthetase (CPSase). CPSase catalyzes the formation of carbamoyl phosphate from the ammonia moiety of glutamine, carbonate, and phosphate donated by ATP, constituting the first step of 2 biosynthetic pathways, one leading to arginine and/or urea and the other to pyrimidine nucleotides. The large subunit (synthetase) binds the substrates ammonia (free or transferred from glutamine from the small subunit), hydrogencarbonate and ATP and carries out an ATP-coupled ligase reaction, activating hydrogencarbonate by forming carboxy phosphate which reacts with ammonia to form carbamoyl phosphate. In Rhizobium meliloti (strain 1021) (Ensifer meliloti), this protein is Carbamoyl phosphate synthase large chain.